Here is a 524-residue protein sequence, read N- to C-terminus: Tubulin-specific chaperone E (524 aa).

S2 is subject to N-acetylserine. One can recognise a CAP-Gly domain in the interval 27-71 (GAVPPVAGLWLGVEWDNPERGKHDGSHEGTMYFKCRHPTGGSFVR). 7 LRR repeats span residues 154-175 (NIRV…VLIA), 180-201 (DLEA…PTLT), 206-227 (TLKT…HCAP), 231-253 (VLEE…NVLQ), 254-275 (KMRL…SLIA), 279-300 (RLEH…DAEI), and 309-330 (ALKY…NELD). The 39-residue stretch at 343 to 381 (NPLSKADKAEEIIIAKIAQLRTLNRCQILPEERRGAELD) folds into the LRRCT domain. The residue at position 460 (K460) is an N6-acetyllysine. S492 is modified (phosphoserine).

This sequence belongs to the TBCE family. As to quaternary structure, supercomplex made of cofactors A to E. Cofactors A and D function by capturing and stabilizing tubulin in a quasi-native conformation. Cofactor E binds to the cofactor D-tubulin complex; interaction with cofactor C then causes the release of tubulin polypeptides that are committed to the native state. Cofactors B and E can form a heterodimer which binds to alpha-tubulin and enhances their ability to dissociate tubulin heterodimers. Interacts with TBCD. Ubiquitously expressed.

It is found in the cytoplasm. Its subcellular location is the cytoskeleton. Functionally, tubulin-folding protein; involved in the second step of the tubulin folding pathway and in the regulation of tubulin heterodimer dissociation. Required for correct organization of microtubule cytoskeleton and mitotic splindle, and maintenance of the neuronal microtubule network. The polypeptide is Tubulin-specific chaperone E (Tbce) (Mus musculus (Mouse)).